We begin with the raw amino-acid sequence, 4017 residues long: Hybrid PKS-NRPS synthetase cghG (4017 aa).

The 433-residue stretch at 6-438 (QEPIAVIGMA…GTNAHAIIES (433 aa)) folds into the Ketosynthase family 3 (KS3) domain. Residues Cys-179, His-318, and His-358 each act as for beta-ketoacyl synthase activity in the active site. Residues 549–869 (VFTGQGAQWP…GRNKNDVVEL (321 aa)) form a malonyl-CoA:ACP transacylase (MAT) domain region. Positions 936 to 1072 (NPILGRRCVE…ATLHVRFHEP (137 aa)) are N-terminal hotdog fold. One can recognise a PKS/mFAS DH domain in the interval 936–1243 (NPILGRRCVE…VKPFAAATAR (308 aa)). Positions 937-1240 (PILGRRCVET…AVQVKPFAAA (304 aa)) are dehydratase (DH) domain. His-969 serves as the catalytic Proton acceptor; for dehydratase activity. The C-terminal hotdog fold stretch occupies residues 1087-1243 (LVKTDPGRLY…VKPFAAATAR (157 aa)). Residue Asp-1147 is the Proton donor; for dehydratase activity of the active site. Residues 1398–1585 (VANVWIARMV…GVDTHCPVEK (188 aa)) form a methyltransferase (MT) domain region. A ketoreductase (KR)domain region spans residues 2127 to 2300 (TYFLVGLSGE…XXXXXXXXXX (174 aa)). Positions 2423–2499 (AVVQDSLTEN…SLAEEAMAKI (77 aa)) constitute a Carrier 1 domain. Ser-2458 is modified (O-(pantetheine 4'-phosphoryl)serine). Disordered regions lie at residues 2547 to 2606 (VSEA…LQHR) and 2613 to 2632 (WAGS…AQRH). A compositionally biased stretch (polar residues) spans 2548-2578 (SEASGVSATTPSTRAETDASSSPALVSTPGT). The tract at residues 2626-3020 (RRAAQRHETL…GDAMETEKLQ (395 aa)) is condensation. The interval 3053–3453 (EVIAQNPTAV…SGFLAIEGRI (401 aa)) is adenylation. The disordered stretch occupies residues 3567–3586 (PKTTTASTTADGTQPAQPLT). A compositionally biased stretch (low complexity) spans 3569–3579 (TTTASTTADGT). The region spanning 3583-3661 (QPLTPTESRL…SMAALLDQAG (79 aa)) is the Carrier 2 domain. The tract at residues 3588–3658 (TESRLATLWA…ELGSMAALLD (71 aa)) is thiolation. At Ser-3621 the chain carries O-(pantetheine 4'-phosphoryl)serine. Positions 3696-3920 (VTGASGSLGK…DVGRLEDVAA (225 aa)) are reductase-like.

It in the C-terminal section; belongs to the NRP synthetase family.

The catalysed reaction is (2S,4S)-4-hydroxy-4-methylglutamate + 8 malonyl-CoA + 3 S-adenosyl-L-methionine + ATP + 8 NADPH + 11 H(+) = (2S)-3-[(2S)-3,5-dioxo-4-[(2E,4R,6R,8E,10E,12E)-4,6,12-trimethyltetradeca-2,8,10,12-tetraenoyl]pyrrolidin-2-yl]-2-hydroxy-2-methylpropanoate + AMP + 3 S-adenosyl-L-homocysteine + 8 CO2 + diphosphate + 8 NADP(+) + 8 CoA + 6 H2O. It participates in secondary metabolite biosynthesis. Functionally, hybrid PKS-NRPS synthetase; part of the gene cluster that mediates the biosynthesis of the tetramic acid Sch210972, a potential anti-HIV fungal natural product that contains a decalin core. The PKS module of cghG together with the enoylreductase cghC catalyze the formation of the polyketide unit which is then conjugated to 4-hydroxyl-4-methyl glutamate (HMG) by the condensation domain of the cghG NRPS module. One unique structural feature of Sch210972 is the tetramic acid motif proposed to be derived from the non-proteinogenic amino acid HMG, by a Dieckmann-type condensation catalyzed by the reductase domain of cghG. The aldolase cghB catalyzes the aldol condensation of 2 molecules of pyruvic acid to yield the intermediate 4-hydroxyl-4-methyl-2-oxoglutarate (HMOG), which can then be stereoselectively transaminated by an unidentified enzyme to form HMG. The Diels-Alderase cghA then uses the Dieckmann product released by cghG as substrate and catalyzes the Diels-Alder cycloaddition to form the decalin ring of Sch210972. CghA also suppresses the nonenzymatic formation of the alternative stereoisomer. The chain is Hybrid PKS-NRPS synthetase cghG from Chaetomium globosum (strain ATCC 6205 / CBS 148.51 / DSM 1962 / NBRC 6347 / NRRL 1970) (Soil fungus).